A 354-amino-acid chain; its full sequence is Molybdenum import ATP-binding protein ModC (354 aa).

Residues 1–229 (MLELDFEQQL…SALRLWLQKE (229 aa)) enclose the ABC transporter domain. 31 to 38 (GLSGAGKT) is a binding site for ATP. Residues 289-354 (GSSIRNILAV…IKSVSFHRQL (66 aa)) enclose the Mop domain.

Belongs to the ABC transporter superfamily. Molybdate importer (TC 3.A.1.8) family. As to quaternary structure, the complex is composed of two ATP-binding proteins (ModC), two transmembrane proteins (ModB) and a solute-binding protein (ModA).

It localises to the cell inner membrane. It catalyses the reaction molybdate(out) + ATP + H2O = molybdate(in) + ADP + phosphate + H(+). In terms of biological role, part of the ABC transporter complex ModABC involved in molybdenum import. Responsible for energy coupling to the transport system. In Photorhabdus laumondii subsp. laumondii (strain DSM 15139 / CIP 105565 / TT01) (Photorhabdus luminescens subsp. laumondii), this protein is Molybdenum import ATP-binding protein ModC.